A 373-amino-acid chain; its full sequence is Spore germination protein A3 (373 aa).

The signal sequence occupies residues 1-17 (MKIRILCMFICTLLLSG). C18 is lipidated: N-palmitoyl cysteine. C18 is lipidated: S-diacylglycerol cysteine.

This sequence belongs to the GerABKC lipoprotein family.

It localises to the cell membrane. Forms a complex at the inner spore membrane which acts as a receptor for L-alanine, thus is involved in the stimulation of germination in response to alanine. Can stimulate germination in the absence of GerD and GerK gene products (fructose and glucose receptors, respectively), but the response is improved in their presence. This Bacillus subtilis (strain 168) protein is Spore germination protein A3 (gerAC).